The chain runs to 24 residues: Unknown protein NF004 from 2D-PAGE (24 aa).

This chain is Unknown protein NF004 from 2D-PAGE, found in Naegleria fowleri (Brain eating amoeba).